A 694-amino-acid chain; its full sequence is Probable methyltransferase PMT11 (694 aa).

The Cytoplasmic portion of the chain corresponds to 1–14; sequence MKPLTNGDLFKSPT. Residues 15–32 traverse the membrane as a helical; Signal-anchor for type II membrane protein segment; that stretch reads LIKISALVFVTVAFFYLG. The Lumenal segment spans residues 33-694; that stretch reads KHWSDDGYQQ…LTCEKRLLRA (662 aa). Residues asparagine 69 and asparagine 77 are each glycosylated (N-linked (GlcNAc...) asparagine). The interval 83-128 is disordered; it reads IPATIRQQPPSVVADTEKVKVEANPPPPPPPSPSPPPPPGPVKSFG. Residues 106–123 show a composition bias toward pro residues; sequence NPPPPPPPSPSPPPPPGP. Residues asparagine 155, asparagine 378, and asparagine 423 are each glycosylated (N-linked (GlcNAc...) asparagine).

It belongs to the methyltransferase superfamily.

Its subcellular location is the golgi apparatus membrane. The chain is Probable methyltransferase PMT11 from Arabidopsis thaliana (Mouse-ear cress).